Here is a 692-residue protein sequence, read N- to C-terminus: Vacuolar amino acid transporter 3 (692 aa).

Polar residues predominate over residues 1-14 (MNGKEVSSGSGRTQ). The interval 1–71 (MNGKEVSSGS…TGGLLKKPPL (71 aa)) is disordered. Residues 15–24 (SNNNKKNNNG) show a composition bias toward low complexity. The span at 28-38 (GISHASGSPLT) shows a compositional bias: polar residues. Phosphoserine is present on residues S59, S119, and S121. Disordered regions lie at residues 135–170 (KWTN…SNRK) and 258–294 (DLSE…GRHP). The span at 141–153 (PSSPSQYQYPSQP) shows a compositional bias: low complexity. Over residues 154-167 (ALSTSIPSQAPSFS) the composition is skewed to polar residues. S165 is subject to Phosphoserine. Residues 258-279 (DLSEEEEEEEETEEEPEEEALE) show a composition bias toward acidic residues. 11 consecutive transmembrane segments (helical) span residues 302-322 (AVLL…PKAF), 329-349 (FSAL…VSLI), 374-394 (FAIL…YTVF), 412-432 (GSIS…PLSL), 443-463 (ALIA…YSIY), 483-503 (WSLF…LIPI), 519-539 (AVMC…YAAF), 561-581 (VQLL…FPAI), 607-627 (YFRC…ANDL), 630-650 (FVSL…PPLL), and 665-685 (LLLD…TSWQ).

The protein belongs to the amino acid/polyamine transporter 2 family.

It is found in the vacuole membrane. Its function is as follows. Involved in amino acid efflux from the vacuole to the cytoplasm. Capable of transporting large neutral amino acids including tyrosine, glutamine, asparagine, isoleucine and leucine. This chain is Vacuolar amino acid transporter 3 (AVT3), found in Saccharomyces cerevisiae (strain ATCC 204508 / S288c) (Baker's yeast).